Here is a 260-residue protein sequence, read N- to C-terminus: MTSLKLLKEKAPLVICITNDVVKNFTANGLVALGASPAMSEFPEDLEDLLKYAGGLLINIGTLTDENWKLYQAALKIAEKYNVPAVLDPVACGAGEYRKKVADDLINNYKLAAIRGNAGEIASLVGIDVASKGVDSAGVDNIDEIALAANEKFNIPIVVTGEVDAIAVNGEVVTIHNGSAMMPKVIGTGCLLGAVVASFIGLEKGQELKSLETAMLVYNIAGEMAEKRPNGHLPGTFKVEFINSLYEITDEDVKEFKRVK.

Substrate is bound at residue methionine 39. Residues arginine 115 and threonine 160 each contribute to the ATP site. Glycine 187 serves as a coordination point for substrate.

It belongs to the Thz kinase family. It depends on Mg(2+) as a cofactor.

The catalysed reaction is 5-(2-hydroxyethyl)-4-methylthiazole + ATP = 4-methyl-5-(2-phosphooxyethyl)-thiazole + ADP + H(+). It functions in the pathway cofactor biosynthesis; thiamine diphosphate biosynthesis; 4-methyl-5-(2-phosphoethyl)-thiazole from 5-(2-hydroxyethyl)-4-methylthiazole: step 1/1. Catalyzes the phosphorylation of the hydroxyl group of 4-methyl-5-beta-hydroxyethylthiazole (THZ). This chain is Hydroxyethylthiazole kinase 1, found in Streptococcus pneumoniae (strain JJA).